The primary structure comprises 837 residues: Zinc fingers and homeoboxes protein 2 (837 aa).

The interval 27-77 is interaction with EFNB1; sequence VDRAKEKGIGTPQPDVAKDSWAAELENSSKENEVIEVKSMGESQSKKLQGG. At threonine 37 the chain carries Phosphothreonine. Lysine 64 is covalently cross-linked (Glycyl lysine isopeptide (Lys-Gly) (interchain with G-Cter in SUMO2)). 2 consecutive C2H2-type zinc fingers follow at residues 78–101 and 110–133; these read YECK…DMQH and YVCA…SKFH. Low complexity predominate over residues 164 to 180; that stretch reads SITTSGPGTGDSDSGIS. The tract at residues 164 to 204 is disordered; sequence SITTSGPGTGDSDSGISVSKTPIMKPGKPKADAKKVPKKPE. Residues 192-204 show a composition bias toward basic and acidic residues; it reads PKADAKKVPKKPE. Residues 195–358 form a required for homodimerization region; it reads DAKKVPKKPE…PAQLAPTKVT (164 aa). The residue at position 207 (threonine 207) is a Phosphothreonine. 4 DNA-binding regions (homeobox) span residues 263-324, 439-501, 530-591, and 628-690; these read NTTK…WSPE, TPAS…IVHI, PQKF…EQAV, and SPSP…TVKW. The tract at residues 263-446 is required for repressor activity; it reads NTTKYNSALD…PLTPASDRKK (184 aa). The tract at residues 263-497 is required for interaction with NFYA; the sequence is NTTKYNSALD…SDHRYRCQRG (235 aa). The segment at 317-446 is required for nuclear localization; it reads HGISWSPEEV…PLTPASDRKK (130 aa). Residues 404-445 are disordered; the sequence is GQKRPLVTPQAAPEPKRPHIAQVPEPPPKVANPPLTPASDRK. Over residues 427–439 the composition is skewed to pro residues; it reads PEPPPKVANPPLT. Lysine 455 participates in a covalent cross-link: Glycyl lysine isopeptide (Lys-Gly) (interchain with G-Cter in SUMO2). The interval 755–837 is disordered; the sequence is PAKDCLPAKP…DCVPAEAGQA (83 aa). Serine 825 and serine 827 each carry phosphoserine.

This sequence belongs to the ZHX family. Homodimer (via homeobox domain). Heterodimer with ZHX1 (via homeobox domain 1). Heterodimer with ZHX3 (via homeobox domain 1). Heterodimerization with ZHX1 is not necessary for repressor activity. Interacts (via homeobox domain) with NFYA (via N-terminus). Interacts with EFNB1 intracellular domain peptide; the interaction enhances ZHX2 transcriptional repression activity. Ubiquitously expressed. Expressed in podocytes.

The protein localises to the nucleus. In terms of biological role, acts as a transcriptional repressor. Represses the promoter activity of the CDC25C gene stimulated by NFYA. May play a role in retinal development where it regulates the composition of bipolar cell populations, by promoting differentiation of bipolar OFF-type cells. In the brain, may promote maintenance and suppress differentiation of neural progenitor cells in the developing cortex. The polypeptide is Zinc fingers and homeoboxes protein 2 (ZHX2) (Homo sapiens (Human)).